The chain runs to 396 residues: L-lactate dehydrogenase (396 aa).

The 380-residue stretch at 1–380 folds into the FMN hydroxy acid dehydrogenase domain; the sequence is MIISAASDYR…TQDSLVQGLG (380 aa). Tyr24 contacts substrate. FMN contacts are provided by Ser106 and Gln127. Residue Tyr129 participates in substrate binding. Thr155 contributes to the FMN binding site. Substrate is bound at residue Arg164. An FMN-binding site is contributed by Lys251. His275 acts as the Proton acceptor in catalysis. Arg278 lines the substrate pocket. 306–330 serves as a coordination point for FMN; it reads DSGIRNGLDVVRMIALGADTVLLGR.

Belongs to the FMN-dependent alpha-hydroxy acid dehydrogenase family. FMN is required as a cofactor.

The protein localises to the cell inner membrane. The catalysed reaction is (S)-lactate + A = pyruvate + AH2. Functionally, catalyzes the conversion of L-lactate to pyruvate. Is coupled to the respiratory chain. The sequence is that of L-lactate dehydrogenase from Escherichia coli O7:K1 (strain IAI39 / ExPEC).